The sequence spans 96 residues: Large ribosomal subunit protein eL14 (96 aa).

It belongs to the eukaryotic ribosomal protein eL14 family.

In Sulfurisphaera tokodaii (strain DSM 16993 / JCM 10545 / NBRC 100140 / 7) (Sulfolobus tokodaii), this protein is Large ribosomal subunit protein eL14.